Here is a 109-residue protein sequence, read N- to C-terminus: Large ribosomal subunit protein bL31B (109 aa).

Residues 79-109 (NVRQPAQQPQPEEDALPAAKGKKKVVTKKKK) form a disordered region. The segment covering 98–109 (KGKKKVVTKKKK) has biased composition (basic residues).

Belongs to the bacterial ribosomal protein bL31 family. Type B subfamily. In terms of assembly, part of the 50S ribosomal subunit.

The sequence is that of Large ribosomal subunit protein bL31B from Chlamydia pneumoniae (Chlamydophila pneumoniae).